The following is a 584-amino-acid chain: uncharacterized protein (584 aa).

Disordered stretches follow at residues Leu-123–Pro-156, Lys-209–Gly-264, and Ser-355–Thr-479. 2 stretches are compositionally biased toward low complexity: residues Ser-237 to Ser-260 and Ser-366 to Thr-376. 2 stretches are compositionally biased toward polar residues: residues Pro-377–Thr-388 and Asp-395–Pro-419. Positions Met-425–Thr-479 are enriched in low complexity.

This is an uncharacterized protein from Dictyostelium discoideum (Social amoeba).